A 256-amino-acid polypeptide reads, in one-letter code: Hydroxyacylglutathione hydrolase (256 aa).

Positions 57, 59, 61, 62, 115, 134, and 172 each coordinate Zn(2+).

This sequence belongs to the metallo-beta-lactamase superfamily. Glyoxalase II family. In terms of assembly, monomer. Zn(2+) serves as cofactor.

It catalyses the reaction an S-(2-hydroxyacyl)glutathione + H2O = a 2-hydroxy carboxylate + glutathione + H(+). Its pathway is secondary metabolite metabolism; methylglyoxal degradation; (R)-lactate from methylglyoxal: step 2/2. Thiolesterase that catalyzes the hydrolysis of S-D-lactoyl-glutathione to form glutathione and D-lactic acid. In Rhizobium johnstonii (strain DSM 114642 / LMG 32736 / 3841) (Rhizobium leguminosarum bv. viciae), this protein is Hydroxyacylglutathione hydrolase.